The primary structure comprises 291 residues: Pyridoxal 5'-phosphate synthase subunit PdxS (291 aa).

Asp23 is a D-ribose 5-phosphate binding site. The active-site Schiff-base intermediate with D-ribose 5-phosphate is Lys80. Residue Gly152 coordinates D-ribose 5-phosphate. A D-glyceraldehyde 3-phosphate-binding site is contributed by Arg164. D-ribose 5-phosphate is bound by residues Gly213 and 234-235 (GS).

It belongs to the PdxS/SNZ family. In the presence of PdxT, forms a dodecamer of heterodimers.

The enzyme catalyses aldehydo-D-ribose 5-phosphate + D-glyceraldehyde 3-phosphate + L-glutamine = pyridoxal 5'-phosphate + L-glutamate + phosphate + 3 H2O + H(+). Its pathway is cofactor biosynthesis; pyridoxal 5'-phosphate biosynthesis. In terms of biological role, catalyzes the formation of pyridoxal 5'-phosphate from ribose 5-phosphate (RBP), glyceraldehyde 3-phosphate (G3P) and ammonia. The ammonia is provided by the PdxT subunit. Can also use ribulose 5-phosphate and dihydroxyacetone phosphate as substrates, resulting from enzyme-catalyzed isomerization of RBP and G3P, respectively. The sequence is that of Pyridoxal 5'-phosphate synthase subunit PdxS from Bifidobacterium adolescentis (strain ATCC 15703 / DSM 20083 / NCTC 11814 / E194a).